A 298-amino-acid polypeptide reads, in one-letter code: Homoserine kinase (298 aa).

83 to 93 (PISRGLGSSSS) is a binding site for ATP.

This sequence belongs to the GHMP kinase family. Homoserine kinase subfamily.

The protein localises to the cytoplasm. It catalyses the reaction L-homoserine + ATP = O-phospho-L-homoserine + ADP + H(+). It functions in the pathway amino-acid biosynthesis; L-threonine biosynthesis; L-threonine from L-aspartate: step 4/5. Catalyzes the ATP-dependent phosphorylation of L-homoserine to L-homoserine phosphate. The polypeptide is Homoserine kinase (Clostridium botulinum (strain Eklund 17B / Type B)).